A 739-amino-acid chain; its full sequence is Phosphoribosylformylglycinamidine synthase subunit PurL (739 aa).

The active site involves H54. ATP is bound by residues Y57 and K96. E98 contacts Mg(2+). Residues 99–102 (SHNH) and R121 contribute to the substrate site. The active-site Proton acceptor is the H100. Residue D122 participates in Mg(2+) binding. Q245 contacts substrate. D273 is a Mg(2+) binding site. 317-319 (ESQ) contributes to the substrate binding site. ATP is bound by residues D500 and G537. A Mg(2+)-binding site is contributed by N538. Residue S540 participates in substrate binding.

Belongs to the FGAMS family. As to quaternary structure, monomer. Part of the FGAM synthase complex composed of 1 PurL, 1 PurQ and 2 PurS subunits.

It localises to the cytoplasm. It catalyses the reaction N(2)-formyl-N(1)-(5-phospho-beta-D-ribosyl)glycinamide + L-glutamine + ATP + H2O = 2-formamido-N(1)-(5-O-phospho-beta-D-ribosyl)acetamidine + L-glutamate + ADP + phosphate + H(+). It participates in purine metabolism; IMP biosynthesis via de novo pathway; 5-amino-1-(5-phospho-D-ribosyl)imidazole from N(2)-formyl-N(1)-(5-phospho-D-ribosyl)glycinamide: step 1/2. In terms of biological role, part of the phosphoribosylformylglycinamidine synthase complex involved in the purines biosynthetic pathway. Catalyzes the ATP-dependent conversion of formylglycinamide ribonucleotide (FGAR) and glutamine to yield formylglycinamidine ribonucleotide (FGAM) and glutamate. The FGAM synthase complex is composed of three subunits. PurQ produces an ammonia molecule by converting glutamine to glutamate. PurL transfers the ammonia molecule to FGAR to form FGAM in an ATP-dependent manner. PurS interacts with PurQ and PurL and is thought to assist in the transfer of the ammonia molecule from PurQ to PurL. This is Phosphoribosylformylglycinamidine synthase subunit PurL from Exiguobacterium sp. (strain ATCC BAA-1283 / AT1b).